A 467-amino-acid chain; its full sequence is ATP synthase subunit beta (467 aa).

150-157 (GGAGVGKT) lines the ATP pocket.

Belongs to the ATPase alpha/beta chains family. As to quaternary structure, F-type ATPases have 2 components, CF(1) - the catalytic core - and CF(0) - the membrane proton channel. CF(1) has five subunits: alpha(3), beta(3), gamma(1), delta(1), epsilon(1). CF(0) has three main subunits: a(1), b(2) and c(9-12). The alpha and beta chains form an alternating ring which encloses part of the gamma chain. CF(1) is attached to CF(0) by a central stalk formed by the gamma and epsilon chains, while a peripheral stalk is formed by the delta and b chains.

It localises to the cell inner membrane. It catalyses the reaction ATP + H2O + 4 H(+)(in) = ADP + phosphate + 5 H(+)(out). Functionally, produces ATP from ADP in the presence of a proton gradient across the membrane. The catalytic sites are hosted primarily by the beta subunits. The chain is ATP synthase subunit beta from Polaromonas sp. (strain JS666 / ATCC BAA-500).